The sequence spans 942 residues: Leucine--tRNA ligase 2 (942 aa).

Residues 35-45 (PYPNSPFHLGH) carry the 'HIGH' region motif. Positions 619–623 (KMSKS) match the 'KMSKS' region motif. K622 is an ATP binding site.

Belongs to the class-I aminoacyl-tRNA synthetase family.

Its subcellular location is the cytoplasm. It carries out the reaction tRNA(Leu) + L-leucine + ATP = L-leucyl-tRNA(Leu) + AMP + diphosphate. This chain is Leucine--tRNA ligase 2, found in Sulfolobus acidocaldarius (strain ATCC 33909 / DSM 639 / JCM 8929 / NBRC 15157 / NCIMB 11770).